A 380-amino-acid polypeptide reads, in one-letter code: Gibberellin 20 oxidase 3 (380 aa).

The 101-residue stretch at 221 to 321 folds into the Fe2OG dioxygenase domain; that stretch reads DSDSIFRLNY…RKTFAFFLCP (101 aa). Residues H246, D248, and H302 each coordinate Fe cation. R312 is a catalytic residue.

The protein belongs to the iron/ascorbate-dependent oxidoreductase family. GA20OX subfamily. Requires Fe(2+) as cofactor. It depends on L-ascorbate as a cofactor. In terms of tissue distribution, expressed at high level in developing siliques. Detected in seeds, roots, leaves and inflorescences. In seeds, specifically detected at the outer layer of the outer integument.

It catalyses the reaction gibberellin A12 + 2 2-oxoglutarate + 3 O2 + H(+) = gibberellin A9 + 2 succinate + 3 CO2 + 2 H2O. The catalysed reaction is gibberellin A12 + 3 2-oxoglutarate + 3 O2 = gibberellin A25 + 3 succinate + 3 CO2 + H2O + H(+). The enzyme catalyses gibberellin A53 + 2 2-oxoglutarate + 3 O2 + H(+) = gibberellin A20 + 2 succinate + 3 CO2 + 2 H2O. It functions in the pathway plant hormone biosynthesis; gibberellin biosynthesis. Its function is as follows. Key oxidase enzyme in the biosynthesis of gibberellin that catalyzes the conversion of GA12 and GA53 to GA9 and GA20 respectively, via a three-step oxidation at C-20 of the GA skeleton, and GA25 is also formed as a minor product. GA53 is less effectively oxidized than GA12. This is Gibberellin 20 oxidase 3 (GA20OX3) from Arabidopsis thaliana (Mouse-ear cress).